The following is a 403-amino-acid chain: Neuromedin U receptor homolog nmur-2 (403 aa).

The Extracellular segment spans residues 1–27 (MSQCTVEYNVSEITEYVLSTLGERCQS). Residues 28-48 (AGIVIPTVIIYGTIFLLGLFG) traverse the membrane as a helical segment. Over 49–68 (NICTCIVIAANKSMHNPTNY) the chain is Cytoplasmic. Residues 69 to 89 (YLFSLAVSDIIALILGLPMEF) traverse the membrane as a helical segment. Topologically, residues 90–109 (YQSLDYSYPYRFSEGICKAR) are extracellular. A helical transmembrane segment spans residues 110–130 (AFLIEFTSYASIMIICCFSFE). Residues 131–151 (RWLAICHPLRSKIFSTLWRAN) are Cytoplasmic-facing. A helical transmembrane segment spans residues 152–172 (VLIILAWTISFVCALPIAFIV). At 173-216 (QINKLPLPEDAKYQPWTNKVSTDGIFVLHTEFCAMNQSRPDQQK) the chain is on the extracellular side. Residues 217–237 (MIIIFAFTVFFVIPAIAIVIM) traverse the membrane as a helical segment. Over 238-268 (YAHIAVQLESSEIDLKGDKMVKKRRNKSNRT) the chain is Cytoplasmic. Residues 269–289 (VLKMLLSVVITFFICWLPFHI) traverse the membrane as a helical segment. The Extracellular portion of the chain corresponds to 290-304 (QRLLSVYTTWSETTT). A helical transmembrane segment spans residues 305–325 (ISPPVQFLSMIVFYISGFCYY). Topologically, residues 326-403 (SNSAANPILY…PHRKLEVHNY (78 aa)) are cytoplasmic.

The protein belongs to the G-protein coupled receptor 1 family.

Its subcellular location is the membrane. Putative G protein-coupled receptor for pyrokinin-like neuropeptide derived from the processing of the neuropeptide precursor capa-1. The polypeptide is Neuromedin U receptor homolog nmur-2 (Caenorhabditis elegans).